Consider the following 170-residue polypeptide: MKTQRDSPSLGRWSLVLLLLGLVMPLAIVAQVLSYQEAVLRAIDGINQRSSDANLYRLLDLDPRPTMDGDPDTPKPVSFTVKETVCPRTTQKSPEDCDFKEDGLVKRCVGTVILNQARDSFDISCDKDNRRSARLGNFFRKVKEKIGGGLKKVGQKIKDFLGNLVPRTAS.

An N-terminal signal peptide occupies residues 1 to 30 (MKTQRDSPSLGRWSLVLLLLGLVMPLAIVA). A propeptide spans 31 to 131 (QVLSYQEAVL…DISCDKDNRR (101 aa)) (cathelin-like domain (CLD)). Cystine bridges form between Cys86-Cys97 and Cys108-Cys125. The segment at 150–162 (LKKVGQKIKDFLG) is active core.

It belongs to the cathelicidin family. As to quaternary structure, monomer, homodimer or homotrimer (in vitro). Oligomerizes as tetra- or hexamer in solution (in vitro). In terms of processing, proteolytically cleaved by proteinase PRTN3 into antibacterial peptide LL-37. Proteolytically cleaved by cathepsin CTSG and neutrophil elastase ELANE. Resistant to proteolytic degradation in solution, and when bound to both zwitterionic (mimicking mammalian membranes) and negatively charged membranes (mimicking bacterial membranes). Post-translationally, after secretion onto the skin surface, the CAMP gene product is processed by a serine protease-dependent mechanism into multiple novel antimicrobial peptides distinct from and shorter than cathelicidin LL-37. These peptides show enhanced antimicrobial action, acquiring the ability to kill skin pathogens such as S.aureus, E.coli and C.albicans. These peptides have lost the ability to stimulate CXCL8/IL8 release from keratinocytes. The peptides act synergistically, killing bacteria at lower concentrations when present together, and maintain activity at increased salt condition.

It is found in the secreted. The protein resides in the vesicle. Its function is as follows. Antimicrobial protein that is an integral component of the innate immune system. Binds to bacterial lipopolysaccharides (LPS). Acts via neutrophil N-formyl peptide receptors to enhance the release of CXCL2. Postsecretory processing generates multiple cathelicidin antimicrobial peptides with various lengths which act as a topical antimicrobial defense in sweat on skin. The unprocessed precursor form, cathelicidin antimicrobial peptide, inhibits the growth of Gram-negative E.coli and E.aerogenes with efficiencies comparable to that of the mature peptide LL-37 (in vitro). Antimicrobial peptide that is an integral component of the innate immune system. Binds to bacterial lipopolysaccharides (LPS). Causes membrane permeabilization by forming transmembrane pores (in vitro). Causes lysis of E.coli. Exhibits antimicrobial activity against Gram-negative bacteria such as P.aeruginosa, S.typhimurium, E.aerogenes, E.coli and P.syringae, Gram-positive bacteria such as L.monocytogenes, S.epidermidis, S.pyogenes and S.aureus, as well as vancomycin-resistant enterococci (in vitro). Exhibits antimicrobial activity against methicillin-resistant S.aureus, P.mirabilis, and C.albicans in low-salt media, but not in media containing 100 mM NaCl (in vitro). Forms chiral supramolecular assemblies with quinolone signal (PQS) molecules of P.aeruginosa, which may lead to interference of bacterial quorum signaling and perturbance of bacterial biofilm formation. May form supramolecular fiber-like assemblies on bacterial membranes. Induces cytokine and chemokine producation as well as TNF/TNFA and CSF2/GMCSF production in normal human keratinocytes. Exhibits hemolytic activity against red blood cells. In terms of biological role, exhibits antimicrobial activity against E.coli and B.megaterium (in vitro). The polypeptide is Cathelicidin antimicrobial peptide (Macaca fascicularis (Crab-eating macaque)).